We begin with the raw amino-acid sequence, 190 residues long: Potassium-transporting ATPase KdpC subunit (190 aa).

Residues leucine 11–alanine 31 traverse the membrane as a helical segment.

It belongs to the KdpC family. The system is composed of three essential subunits: KdpA, KdpB and KdpC.

It localises to the cell inner membrane. In terms of biological role, part of the high-affinity ATP-driven potassium transport (or Kdp) system, which catalyzes the hydrolysis of ATP coupled with the electrogenic transport of potassium into the cytoplasm. This subunit acts as a catalytic chaperone that increases the ATP-binding affinity of the ATP-hydrolyzing subunit KdpB by the formation of a transient KdpB/KdpC/ATP ternary complex. This is Potassium-transporting ATPase KdpC subunit from Pseudomonas syringae pv. tomato (strain ATCC BAA-871 / DC3000).